The primary structure comprises 336 residues: Pyridoxal 5'-phosphate synthase subunit PdxS (336 aa).

Asp64 lines the D-ribose 5-phosphate pocket. Lys121 (schiff-base intermediate with D-ribose 5-phosphate) is an active-site residue. Gly193 is a D-ribose 5-phosphate binding site. A D-glyceraldehyde 3-phosphate-binding site is contributed by Lys205. D-ribose 5-phosphate is bound by residues Gly254 and 275 to 276; that span reads GS.

It belongs to the PdxS/SNZ family. In terms of assembly, in the presence of PdxT, forms a dodecamer of heterodimers.

It carries out the reaction aldehydo-D-ribose 5-phosphate + D-glyceraldehyde 3-phosphate + L-glutamine = pyridoxal 5'-phosphate + L-glutamate + phosphate + 3 H2O + H(+). Its pathway is cofactor biosynthesis; pyridoxal 5'-phosphate biosynthesis. Its function is as follows. Catalyzes the formation of pyridoxal 5'-phosphate from ribose 5-phosphate (RBP), glyceraldehyde 3-phosphate (G3P) and ammonia. The ammonia is provided by the PdxT subunit. Can also use ribulose 5-phosphate and dihydroxyacetone phosphate as substrates, resulting from enzyme-catalyzed isomerization of RBP and G3P, respectively. The chain is Pyridoxal 5'-phosphate synthase subunit PdxS from Pyrobaculum aerophilum (strain ATCC 51768 / DSM 7523 / JCM 9630 / CIP 104966 / NBRC 100827 / IM2).